A 275-amino-acid chain; its full sequence is Polyamine aminopropyltransferase (275 aa).

Positions 2–235 constitute a PABS domain; the sequence is ELWFTEKQTK…GLWTFTIGSK (234 aa). An S-methyl-5'-thioadenosine-binding site is contributed by glutamine 31. 2 residues coordinate spermidine: histidine 62 and aspartate 86. Residues glutamate 106 and 137–138 each bind S-methyl-5'-thioadenosine; that span reads DG. The active-site Proton acceptor is the aspartate 155. 155–158 contributes to the spermidine binding site; the sequence is DSTE. Proline 162 provides a ligand contact to S-methyl-5'-thioadenosine.

This sequence belongs to the spermidine/spermine synthase family. In terms of assembly, homodimer or homotetramer.

It is found in the cytoplasm. It catalyses the reaction S-adenosyl 3-(methylsulfanyl)propylamine + putrescine = S-methyl-5'-thioadenosine + spermidine + H(+). The protein operates within amine and polyamine biosynthesis; spermidine biosynthesis; spermidine from putrescine: step 1/1. Functionally, catalyzes the irreversible transfer of a propylamine group from the amino donor S-adenosylmethioninamine (decarboxy-AdoMet) to putrescine (1,4-diaminobutane) to yield spermidine. The protein is Polyamine aminopropyltransferase of Bacillus cytotoxicus (strain DSM 22905 / CIP 110041 / 391-98 / NVH 391-98).